The chain runs to 276 residues: Bis(5'-nucleosyl)-tetraphosphatase, symmetrical (276 aa).

This sequence belongs to the Ap4A hydrolase family.

The enzyme catalyses P(1),P(4)-bis(5'-adenosyl) tetraphosphate + H2O = 2 ADP + 2 H(+). Functionally, hydrolyzes diadenosine 5',5'''-P1,P4-tetraphosphate to yield ADP. The chain is Bis(5'-nucleosyl)-tetraphosphatase, symmetrical from Neisseria gonorrhoeae (strain ATCC 700825 / FA 1090).